Consider the following 1127-residue polypeptide: Glutamate receptor-interacting protein 1 (1127 aa).

A lipid anchor (S-palmitoyl cysteine) is attached at Gln11. A Phosphoserine modification is found at Ser43. PDZ domains lie at 53-136 (VVEL…EYEL), 150-238 (TVEV…EYDV), 252-336 (LVEV…LPHH), 471-560 (EVVL…EFDV), 572-657 (HVKL…RKDE), and 672-754 (TVEL…KKQT). Disordered regions lie at residues 752–802 (KQTD…PSVD), 840–865 (KQRT…SNED), and 942–980 (MARS…GRKS). 2 stretches are compositionally biased toward polar residues: residues 840-856 (KQRT…SQTY) and 947-973 (LGRQ…NTLP). The PDZ 7 domain maps to 1003–1085 (KVTLYKDSGM…KLDLVISRNP (83 aa)). The interval 1108 to 1127 (FFQQPSHGGNLETREPTNTL) is disordered.

As to quaternary structure, interacts with EFNB3, GRIA2, GRIA3, GRIPAP1/GRASP1, PPFIA1, PPFIA4, FRAS1, PTPRF, liprins-alpha and the C-terminal tail of PRLHR. Can form homomultimers or heteromultimers with GRIP2. Interacts with EFNB1, EPHA7, EPHB2, KIF5A, KIF5B and KIF5C. Forms a ternary complex with GRIA2 and CSPG4. Interacts with ATAD1 in an ATP-dependent manner. ATAD1-catalyzed ATP hydrolysis disrupts binding to ATAD1 and to GRIA2 and leads to AMPAR complex disassembly. Interacts with SLC30A9 and PLCD4. Interacts with BUD23. Forms a complex with NSG1, GRIA2 and STX12; controls the intracellular fate of AMPAR and the endosomal sorting of the GRIA2 subunit toward recycling and membrane targeting. Interacts with NSG1. Post-translationally, palmitoylation of isoform 2. Expressed in brain. Isoform 2 is the major isoform in brain. Expressed in oligodendrocyte lineage cells.

It localises to the membrane. The protein localises to the cytoplasmic vesicle. Its subcellular location is the perikaryon. It is found in the cell projection. The protein resides in the dendrite. It localises to the cytoplasm. The protein localises to the endomembrane system. Its subcellular location is the postsynaptic cell membrane. It is found in the postsynaptic density. The protein resides in the endoplasmic reticulum membrane. May play a role as a localized scaffold for the assembly of a multiprotein signaling complex and as mediator of the trafficking of its binding partners at specific subcellular location in neurons. Through complex formation with NSG1, GRIA2 and STX12 controls the intracellular fate of AMPAR and the endosomal sorting of the GRIA2 subunit toward recycling and membrane targeting. This Mus musculus (Mouse) protein is Glutamate receptor-interacting protein 1 (Grip1).